The sequence spans 424 residues: Protein shisa-9 (424 aa).

Positions 1 to 23 (MRRVLRLLLGCFLTELCARVCRA) are cleaved as a signal peptide. At 24 to 149 (QERAGHGQLA…DPLHDPTKDK (126 aa)) the chain is on the extracellular side. 3 N-linked (GlcNAc...) asparagine glycosylation sites follow: asparagine 45, asparagine 89, and asparagine 116. The chain crosses the membrane as a helical span at residues 150 to 170 (TNLIVYIICGVVAVMVLVGIF). The Cytoplasmic segment spans residues 171 to 424 (TKLGLEKAHR…ITNSKTEVTV (254 aa)). The interval 333 to 424 (PRAFSPEHGP…ITNSKTEVTV (92 aa)) is disordered. Residues 414-424 (FITNSKTEVTV) show a composition bias toward polar residues.

This sequence belongs to the shisa family. SHISA9 subfamily. As to quaternary structure, component of some AMPA receptors (ionotropic glutamate receptors) complex, at least composed of some AMPA receptor (GRIA1, GRIA2 and/or GRIA3), CACNG2 and SHISA9, as well as low level of DLG4.

Its subcellular location is the cell projection. It is found in the dendritic spine membrane. The protein resides in the synapse. Functionally, regulator of short-term neuronal synaptic plasticity in the dentate gyrus. Associates with AMPA receptors (ionotropic glutamate receptors) in synaptic spines and promotes AMPA receptor desensitization at excitatory synapses. The chain is Protein shisa-9 (SHISA9) from Homo sapiens (Human).